We begin with the raw amino-acid sequence, 246 residues long: 1-(5-phosphoribosyl)-5-[(5-phosphoribosylamino)methylideneamino] imidazole-4-carboxamide isomerase (246 aa).

Aspartate 7 acts as the Proton acceptor in catalysis. The active-site Proton donor is aspartate 129.

The protein belongs to the HisA/HisF family.

Its subcellular location is the cytoplasm. It carries out the reaction 1-(5-phospho-beta-D-ribosyl)-5-[(5-phospho-beta-D-ribosylamino)methylideneamino]imidazole-4-carboxamide = 5-[(5-phospho-1-deoxy-D-ribulos-1-ylimino)methylamino]-1-(5-phospho-beta-D-ribosyl)imidazole-4-carboxamide. The protein operates within amino-acid biosynthesis; L-histidine biosynthesis; L-histidine from 5-phospho-alpha-D-ribose 1-diphosphate: step 4/9. This Buchnera aphidicola subsp. Acyrthosiphon pisum (strain 5A) protein is 1-(5-phosphoribosyl)-5-[(5-phosphoribosylamino)methylideneamino] imidazole-4-carboxamide isomerase.